The chain runs to 201 residues: Small ribosomal subunit protein eS1 (201 aa).

Belongs to the eukaryotic ribosomal protein eS1 family.

This Methanoregula boonei (strain DSM 21154 / JCM 14090 / 6A8) protein is Small ribosomal subunit protein eS1.